Consider the following 582-residue polypeptide: DBIRD complex subunit ZNF326 (582 aa).

The tract at residues 1 to 124 is mediates transcriptional activation; sequence MDFEDDYTHS…YRNSLDSFGG (124 aa). S48, S56, S63, S69, S81, S82, S91, S106, S114, S118, S121, and S137 each carry phosphoserine. A Glycyl lysine isopeptide (Lys-Gly) (interchain with G-Cter in SUMO2) cross-link involves residue K140. Residues 154–194 are disordered; it reads YSSYSSFSSPHMKPAPVGSRGRGTPAYPESTFGSRNYDAFG. At R173 the chain carries Omega-N-methylarginine. At S212 the chain carries Phosphoserine. Omega-N-methylarginine is present on R235. The Bipartite nuclear localization signal signature appears at 238 to 260; the sequence is KRKMMQPFNKPSGTFIKKPKLAK. K240 is covalently cross-linked (Glycyl lysine isopeptide (Lys-Gly) (interchain with G-Cter in SUMO2)). Residues 243–302 form a disordered region; the sequence is QPFNKPSGTFIKKPKLAKPMEKISLSKSPTKTDPKNEEEEKRRIEARREKQRRRREKNSE. K247 carries the post-translational modification N6-acetyllysine; alternate. K247 is covalently cross-linked (Glycyl lysine isopeptide (Lys-Gly) (interchain with G-Cter in SUMO2); alternate). S249 is modified (phosphoserine). The residue at position 251 (T251) is a Phosphothreonine. Residues K254 and K264 each participate in a glycyl lysine isopeptide (Lys-Gly) (interchain with G-Cter in SUMO2) cross-link. A Phosphoserine modification is found at S270. Over residues 272-290 the composition is skewed to basic and acidic residues; that stretch reads TKTDPKNEEEEKRRIEARR. The C2H2 AKAP95-type 1 zinc finger occupies 314–336; that stretch reads CSFCKFRTFEEKDIELHLESSSH. K401 is covalently cross-linked (Glycyl lysine isopeptide (Lys-Gly) (interchain with G-Cter in SUMO2)). Residues 407–430 form a C2H2 AKAP95-type 2 zinc finger; it reads CSACSVYIPALHSSVQQHLKSPDH. Residues K459 and K467 each participate in a glycyl lysine isopeptide (Lys-Gly) (interchain with G-Cter in SUMO2) cross-link. The segment at 472–582 is disordered; it reads FEIQDHSQDQ…DFPVEQPEEN (111 aa). Over residues 483-523 the composition is skewed to acidic residues; it reads IEGDEEDEEKIDEPIEEEEDEDEEEEAEEVGEVEEVEEVEE. Gly residues predominate over residues 530–545; the sequence is EGEGNIQGVGEGGEVG. The span at 552–567 shows a compositional bias: acidic residues; sequence GVGEVEEVEELEEETA.

The protein belongs to the AKAP95 family. Component of the DBIRD complex. Interacts with CCAR2; the interaction is direct.

It localises to the nucleus matrix. Core component of the DBIRD complex, a multiprotein complex that acts at the interface between core mRNP particles and RNA polymerase II (RNAPII) and integrates transcript elongation with the regulation of alternative splicing: the DBIRD complex affects local transcript elongation rates and alternative splicing of a large set of exons embedded in (A + T)-rich DNA regions. May play a role in neuronal differentiation and is able to bind DNA and activate expression in vitro. This chain is DBIRD complex subunit ZNF326 (ZNF326), found in Homo sapiens (Human).